The chain runs to 122 residues: Large ribosomal subunit protein uL14c (122 aa).

Belongs to the universal ribosomal protein uL14 family. As to quaternary structure, part of the 50S ribosomal subunit.

It is found in the plastid. Its subcellular location is the chloroplast. Functionally, binds to 23S rRNA. This Piper cenocladum (Ant piper) protein is Large ribosomal subunit protein uL14c.